Consider the following 108-residue polypeptide: UPF0060 membrane protein YnfA (108 aa).

The Periplasmic portion of the chain corresponds to 1-5 (MLKTT). The helical transmembrane segment at 6 to 26 (LLFFVTALCEIIGCFLPWLWI) threads the bilayer. The Cytoplasmic segment spans residues 27–30 (KRGA). The chain crosses the membrane as a helical span at residues 31–51 (SVWWLLPAAASLALFVWLLTL). The Periplasmic segment spans residues 52–60 (HPAASGRVY). Residues 61-81 (AAYGGVYVCTALLWLRVVDGV) traverse the membrane as a helical segment. Residues 82–84 (RLT) are Cytoplasmic-facing. A helical membrane pass occupies residues 85-105 (VYDWSGALIALCGMLIIVVGW). Residues 106-108 (GRT) lie on the Periplasmic side of the membrane.

It belongs to the UPF0060 family.

Its subcellular location is the cell inner membrane. The polypeptide is UPF0060 membrane protein YnfA (Salmonella typhi).